The primary structure comprises 397 residues: Acid extracellular protease (397 aa).

Positions methionine 1–alanine 17 are cleaved as a signal peptide. A Peptidase A1 domain is found at tyrosine 61–alanine 378. Residue aspartate 77 is part of the active site. Asparagine 88 carries an N-linked (GlcNAc...) asparagine glycan. Cysteine 93 and cysteine 100 form a disulfide bridge. Aspartate 264 is a catalytic residue. Cysteines 303 and 343 form a disulfide. N-linked (GlcNAc...) asparagine glycans are attached at residues asparagine 310 and asparagine 314.

This sequence belongs to the peptidase A1 family.

It is found in the secreted. The chain is Acid extracellular protease (AXP1) from Yarrowia lipolytica (strain CLIB 122 / E 150) (Yeast).